Here is a 169-residue protein sequence, read N- to C-terminus: Menaquinol:cytochrome c reductase iron-sulfur subunit (169 aa).

In terms of domain architecture, Rieske spans Glu-62 to Leu-160. Residues Cys-102, His-104, Cys-123, and His-126 each coordinate [2Fe-2S] cluster. The cysteines at positions 107 and 125 are disulfide-linked.

The protein belongs to the Rieske iron-sulfur protein family. In terms of assembly, the main subunits of the menaquinol:cytochrome c complex are a Rieske-type iron-sulfur protein (QcrA), a cytochrome b (QcrB) and a cytochrome c (QcrC). The cofactor is [2Fe-2S] cluster.

Component of the menaquinol:cytochrome c reductase complex. The Rieske protein is a high potential 2Fe-2S protein. This is Menaquinol:cytochrome c reductase iron-sulfur subunit (qcrA) from Geobacillus thermodenitrificans.